A 158-amino-acid polypeptide reads, in one-letter code: Protein FAM177B (158 aa).

Residues 36–48 (EYSTEEEEEEEKE) are compositionally biased toward acidic residues. A disordered region spans residues 36-59 (EYSTEEEEEEEKEEQSTNSTLDPS).

Belongs to the FAM177 family.

The protein is Protein FAM177B (FAM177B) of Homo sapiens (Human).